We begin with the raw amino-acid sequence, 321 residues long: Ribosomal RNA small subunit methyltransferase H (321 aa).

S-adenosyl-L-methionine-binding positions include 43–45, aspartate 63, phenylalanine 89, aspartate 110, and glutamine 117; that span reads GGH. Residues 286–321 are disordered; sequence HPAGKALRAGPRETRDNPRSRSAVLRVAERSERHAA. 2 stretches are compositionally biased toward basic and acidic residues: residues 295 to 304 and 312 to 321; these read GPRETRDNPR and VAERSERHAA.

This sequence belongs to the methyltransferase superfamily. RsmH family.

It localises to the cytoplasm. It carries out the reaction cytidine(1402) in 16S rRNA + S-adenosyl-L-methionine = N(4)-methylcytidine(1402) in 16S rRNA + S-adenosyl-L-homocysteine + H(+). Functionally, specifically methylates the N4 position of cytidine in position 1402 (C1402) of 16S rRNA. The sequence is that of Ribosomal RNA small subunit methyltransferase H from Acidithiobacillus ferrooxidans (strain ATCC 23270 / DSM 14882 / CIP 104768 / NCIMB 8455) (Ferrobacillus ferrooxidans (strain ATCC 23270)).